The sequence spans 852 residues: Polyphosphate kinase (852 aa).

Disordered regions lie at residues 1–36 (MATG…DRPI) and 58–82 (SHDP…SRRK). A compositionally biased stretch (basic and acidic residues) spans 20–36 (VARDHPGCGPHRLDRPI). Residues 58 to 67 (SHDPAPSQSV) are compositionally biased toward polar residues. Residue Asn131 coordinates ATP. The tract at residues 251–303 (GDEIGPQRTPPPSDSLDNRVPSNLKRNSDTANQQPTPAENISAPEDGAEQTEP) is disordered. The segment at 258–303 (RTPPPSDSLDNRVPSNLKRNSDTANQQPTPAENISAPEDGAEQTEP) is insert. Positions 270 to 289 (VPSNLKRNSDTANQQPTPAE) are enriched in polar residues. Residues Arg524 and Arg554 each contribute to the Mg(2+) site. Catalysis depends on His584, which acts as the Phosphohistidine intermediate. The ATP site is built by Tyr617, Arg713, and His741.

This sequence belongs to the polyphosphate kinase 1 (PPK1) family. The cofactor is Mg(2+). Post-translationally, an intermediate of this reaction is the autophosphorylated ppk in which a phosphate is covalently linked to a histidine residue through a N-P bond.

The catalysed reaction is [phosphate](n) + ATP = [phosphate](n+1) + ADP. In terms of biological role, catalyzes the reversible transfer of the terminal phosphate of ATP to form a long-chain polyphosphate (polyP). In Rhodopirellula baltica (strain DSM 10527 / NCIMB 13988 / SH1), this protein is Polyphosphate kinase.